The chain runs to 91 residues: Cell division protein FtsB (91 aa).

Over 1-3 (MRW) the chain is Cytoplasmic. A helical membrane pass occupies residues 4-21 (PVIILAVLVVVLQYPLWL). Residues 22–91 (GKGGWLRVWE…EIFVQVPQKH (70 aa)) lie on the Periplasmic side of the membrane. The stretch at 28–72 (RVWEVDRKLHEQREENTRLEERNAGLDAEVRDLKSGNEAIEERAR) forms a coiled coil.

It belongs to the FtsB family. As to quaternary structure, part of a complex composed of FtsB, FtsL and FtsQ.

It is found in the cell inner membrane. In terms of biological role, essential cell division protein. May link together the upstream cell division proteins, which are predominantly cytoplasmic, with the downstream cell division proteins, which are predominantly periplasmic. The protein is Cell division protein FtsB of Azoarcus sp. (strain BH72).